Reading from the N-terminus, the 872-residue chain is Alanine--tRNA ligase (872 aa).

H567, H571, C669, and H673 together coordinate Zn(2+).

The protein belongs to the class-II aminoacyl-tRNA synthetase family. Zn(2+) serves as cofactor.

The protein resides in the cytoplasm. The enzyme catalyses tRNA(Ala) + L-alanine + ATP = L-alanyl-tRNA(Ala) + AMP + diphosphate. Its function is as follows. Catalyzes the attachment of alanine to tRNA(Ala) in a two-step reaction: alanine is first activated by ATP to form Ala-AMP and then transferred to the acceptor end of tRNA(Ala). Also edits incorrectly charged Ser-tRNA(Ala) and Gly-tRNA(Ala) via its editing domain. The sequence is that of Alanine--tRNA ligase from Streptococcus pyogenes serotype M5 (strain Manfredo).